The following is a 388-amino-acid chain: WD repeat-containing protein 55 (388 aa).

Residues 1 to 20 show a composition bias toward acidic residues; the sequence is MDPTCEESPAEDSNNEEEDL. The interval 1–33 is disordered; the sequence is MDPTCEESPAEDSNNEEEDLDSTKAAPRIRDTP. WD repeat units follow at residues 37–76, 83–122, 126–164, 167–206, 209–248, 251–290, and 293–333; these read VLEA…GETK, HHLK…LERR, AHSA…PLMD, QHEE…FELL, PQSG…ATSD, ALRA…VVGT, and QHAG…TVVV. The residue at position 355 (Ser-355) is a Phosphoserine. The tract at residues 364–388 is disordered; that stretch reads REDEEDAKAPEEVVRESDDDDDDSD. Over residues 370 to 379 the composition is skewed to basic and acidic residues; the sequence is AKAPEEVVRE.

It belongs to the WD repeat WDR55 family.

The protein localises to the nucleus. Its subcellular location is the nucleolus. It is found in the cytoplasm. Functionally, nucleolar protein that acts as a modulator of rRNA synthesis. Plays a central role during organogenesis. The polypeptide is WD repeat-containing protein 55 (Wdr55) (Mus musculus (Mouse)).